The chain runs to 295 residues: Glutamyl-Q tRNA(Asp) synthetase (295 aa).

L-glutamate is bound by residues 5–9 (RFAPS) and E41. The 'HIGH' region motif lies at 8–18 (PSPTGLLHIGS). Residues C97, C99, Y117, and C121 each coordinate Zn(2+). Residues Y178 and R196 each contribute to the L-glutamate site. A 'KMSKS' region motif is present at residues 234 to 238 (KWSKQ). An ATP-binding site is contributed by K237.

The protein belongs to the class-I aminoacyl-tRNA synthetase family. GluQ subfamily. Zn(2+) serves as cofactor.

Catalyzes the tRNA-independent activation of glutamate in presence of ATP and the subsequent transfer of glutamate onto a tRNA(Asp). Glutamate is transferred on the 2-amino-5-(4,5-dihydroxy-2-cyclopenten-1-yl) moiety of the queuosine in the wobble position of the QUC anticodon. The sequence is that of Glutamyl-Q tRNA(Asp) synthetase from Neisseria gonorrhoeae (strain ATCC 700825 / FA 1090).